A 331-amino-acid chain; its full sequence is Vacuolar protein sorting-associated protein 26B (331 aa).

Residues 310-331 (AAQRYEGSNPEPTSAQAKEETD) form a disordered region.

Belongs to the VPS26 family. In terms of assembly, component of the heterotrimeric retromer cargo-selective complex (CSC) which is believed to associate with variable sorting nexins to form functionally distinct retromer complex variants.

It localises to the cytoplasm. It is found in the membrane. The protein resides in the endosome. Acts as a component of the retromer cargo-selective complex (CSC). The CSC is believed to be the core functional component of retromer or respective retromer complex variants acting to prevent missorting of selected transmembrane cargo proteins into the lysosomal degradation pathway. Retromer mediates retrograde transport of cargo proteins from endosomes to the trans-Golgi network (TGN). The protein is Vacuolar protein sorting-associated protein 26B (vps26b) of Danio rerio (Zebrafish).